The following is a 335-amino-acid chain: 2-acylglycerol O-acyltransferase 1 (335 aa).

2 helical membrane passes run 24-44 (WVLS…MLVL) and 104-124 (YIFG…NFCT). An N-linked (GlcNAc...) asparagine glycan is attached at asparagine 180.

The protein belongs to the diacylglycerol acyltransferase family. Expressed at high level in kidney and stomach. Expressed at lower level in brown and white adipose tissue, uterus and liver. Not detected in small intestine.

The protein localises to the endoplasmic reticulum membrane. It catalyses the reaction a 2-acylglycerol + an acyl-CoA = a 1,2-diacylglycerol + CoA. It carries out the reaction 2-(9Z-octadecenoyl)-glycerol + butanoyl-CoA = 1-butanoyl-2-(9Z-octadecenoyl)-glycerol + CoA. The enzyme catalyses 2-(9Z-octadecenoyl)-glycerol + octanoyl-CoA = 1-octanoyl-2-(9Z-octadecenoyl)-glycerol + CoA. The catalysed reaction is 2-(9Z-octadecenoyl)-glycerol + dodecanoyl-CoA = 1-dodecanoyl-2-(9Z-octadecenoyl)-glycerol + CoA. It catalyses the reaction 2-(9Z-octadecenoyl)-glycerol + tetradecanoyl-CoA = 1-tetradecanoyl-2-(9Z-octadecenoyl)-glycerol + CoA. It carries out the reaction 2-(9Z-octadecenoyl)-glycerol + hexadecanoyl-CoA = 1-hexadecanoyl-2-(9Z-octadecenoyl)-glycerol + CoA. The enzyme catalyses 2-(9Z-octadecenoyl)-glycerol + octadecanoyl-CoA = 1-octadecanoyl-2-(9Z-octadecenoyl)-glycerol + CoA. The catalysed reaction is eicosanoyl-CoA + 2-(9Z-octadecenoyl)-glycerol = 1-eicosanoyl-2-(9Z-octadecenoyl)-glycerol + CoA. It catalyses the reaction 2-(9Z-octadecenoyl)-glycerol + (9Z)-octadecenoyl-CoA = 1,2-di-(9Z-octadecenoyl)-glycerol + CoA. It carries out the reaction 2-(9Z-octadecenoyl)-glycerol + (9Z,12Z)-octadecadienoyl-CoA = 1-(9Z,12Z-octadecadienoyl)-2-(9Z-octadecenoyl)-glycerol + CoA. The enzyme catalyses 2-(9Z-octadecenoyl)-glycerol + (5Z,8Z,11Z,14Z)-eicosatetraenoyl-CoA = 1-(5Z,8Z,11Z,14Z-eicosatetraenoyl)-2-(9Z-octadecenoyl)-glycerol + CoA. The catalysed reaction is a 2-acylglycerol + an acyl-CoA = a 1,2-diacyl-sn-glycerol + CoA. It catalyses the reaction a 2-acylglycerol + an acyl-CoA = a 2,3-diacyl-sn-glycerol + CoA. It carries out the reaction a 1-acylglycerol + an acyl-CoA = a 1,2-diacylglycerol + CoA. The enzyme catalyses 1-dodecanoylglycerol + (9Z)-octadecenoyl-CoA = 1-dodecanoyl-2-(9Z-octadecenoyl)-glycerol + CoA. The catalysed reaction is 1-tetradecanoylglycerol + (9Z)-octadecenoyl-CoA = 1-tetradecanoyl-2-(9Z-octadecenoyl)-glycerol + CoA. It catalyses the reaction 1-hexadecanoylglycerol + (9Z)-octadecenoyl-CoA = 1-hexadecanoyl-2-(9Z-octadecenoyl)-glycerol + CoA. It carries out the reaction 1-(9Z-octadecenoyl)-glycerol + (9Z)-octadecenoyl-CoA = 1,2-di-(9Z-octadecenoyl)-glycerol + CoA. The enzyme catalyses 1-(9Z,12Z-octadecadienoyl)-glycerol + (9Z)-octadecenoyl-CoA = 1-(9Z,12Z-octadecadienoyl)-2-(9Z-octadecenoyl)-glycerol + CoA. The catalysed reaction is 1-(9Z,12Z,15Z-octadecatrienoyl)-glycerol + (9Z)-octadecenoyl-CoA = 1-(9Z,12Z,15Z-octadecatrienoyl)-2-(9Z-octadecenoyl)-glycerol + CoA. It catalyses the reaction 1-(5Z,8Z,11Z,14Z-eicosatetraenoyl)-glycerol + (9Z)-octadecenoyl-CoA = 1-(5Z,8Z,11Z,14Z-eicosatetraenoyl)-2-(9Z-octadecenoyl)-glycerol + CoA. It carries out the reaction a 1-acylglycerol + an acyl-CoA = a 1,3-diacylglycerol + CoA. The enzyme catalyses 1-dodecanoylglycerol + (9Z)-octadecenoyl-CoA = 1-dodecanoyl-3-(9Z-octadecenoyl)-glycerol + CoA. The catalysed reaction is 1-hexadecanoylglycerol + (9Z)-octadecenoyl-CoA = 1-(9Z-octadecenoyl)-3-hexadecanoylglycerol + CoA. It catalyses the reaction 1-octadecanoylglycerol + (9Z)-octadecenoyl-CoA = 1-octadecanoyl-3-(9Z-octadecenoyl)-glycerol + CoA. It carries out the reaction 1-(9Z-octadecenoyl)-sn-glycerol + (9Z)-octadecenoyl-CoA = 1,3-di-(9Z-octadecenoyl)-glycerol + CoA. The enzyme catalyses 1-(9Z,12Z-octadecadienoyl)-glycerol + (9Z)-octadecenoyl-CoA = 1-(9Z-octadecenoyl)-3-(9Z,12Z-octadecadienoyl)-glycerol + CoA. The catalysed reaction is 1-(9Z,12Z,15Z-octadecatrienoyl)-glycerol + (9Z)-octadecenoyl-CoA = 1-(9Z,12Z,15Z-octadecatrienoyl)-3-(9Z-octadecenoyl)-glycerol + CoA. It catalyses the reaction a 1-acyl-sn-glycerol + an acyl-CoA = a 1,3-diacyl-sn-glycerol + CoA. It carries out the reaction a 3-acyl-sn-glycerol + an acyl-CoA = a 1,3-diacyl-sn-glycerol + CoA. The enzyme catalyses 3-octadecanoyl-sn-glycerol + (9Z)-octadecenoyl-CoA = 1-(9Z-octadecenoyl)-3-octadecanoyl-sn-glycerol + CoA. The protein operates within glycerolipid metabolism; triacylglycerol biosynthesis. Involved in glycerolipid synthesis and lipid metabolism. Catalyzes the formation of diacylglycerol, the precursor of triacylglycerol, by transferring the acyl chain of a fatty acyl-CoA to a monoacylglycerol, mainly at the sn-1 or sn-3 positions. It uses both sn-2-monoacylglycerol (2-acylglycerol) and sn-1-monoacylglycerol (1-acyl-sn-glycerol) equally well as substrates, and uses sn-3-monoacylglycerol (3-acyl-sn-glycerol) with lower efficiency. Probably not involved in absorption of dietary fat in the small intestine. This Mus musculus (Mouse) protein is 2-acylglycerol O-acyltransferase 1.